A 285-amino-acid chain; its full sequence is 4-hydroxybenzoate octaprenyltransferase (285 aa).

The next 8 helical transmembrane spans lie at 28 to 48, 86 to 106, 110 to 130, 133 to 153, 160 to 180, 207 to 227, 232 to 252, and 262 to 284; these read LWAL…CIFF, IAAW…FALI, NSLT…YPFF, FFAI…PMAF, VPLV…AYDT, VAAI…AGVM, WPYW…YTLI, and AAFR…AYAI.

It belongs to the UbiA prenyltransferase family. Requires Mg(2+) as cofactor.

It localises to the cell inner membrane. It carries out the reaction all-trans-octaprenyl diphosphate + 4-hydroxybenzoate = 4-hydroxy-3-(all-trans-octaprenyl)benzoate + diphosphate. The protein operates within cofactor biosynthesis; ubiquinone biosynthesis. Functionally, catalyzes the prenylation of para-hydroxybenzoate (PHB) with an all-trans polyprenyl group. Mediates the second step in the final reaction sequence of ubiquinone-8 (UQ-8) biosynthesis, which is the condensation of the polyisoprenoid side chain with PHB, generating the first membrane-bound Q intermediate 3-octaprenyl-4-hydroxybenzoate. In Cupriavidus pinatubonensis (strain JMP 134 / LMG 1197) (Cupriavidus necator (strain JMP 134)), this protein is 4-hydroxybenzoate octaprenyltransferase.